A 367-amino-acid polypeptide reads, in one-letter code: Putrescine-binding periplasmic protein SpuD (367 aa).

Residues 1–24 (MMKRFGKTLLALTLAGSVAGMAQA) form the signal peptide. A putrescine-binding site is contributed by 36 to 37 (SD). C173 and C236 are disulfide-bonded. Residues D244 and D275 each contribute to the putrescine site.

Belongs to the bacterial solute-binding protein PotD/PotF family.

The protein localises to the periplasm. It localises to the secreted. In terms of biological role, putrescine-binding protein probably required for putrescine uptake into cells. Binds putrescine with high affinity, spermidine with relatively low affinity. Does not bind cadaverine or spermine. Putrescine binding induces large inter-domain conformational changes. The sequence is that of Putrescine-binding periplasmic protein SpuD (spuD) from Pseudomonas aeruginosa (strain UCBPP-PA14).